Here is a 322-residue protein sequence, read N- to C-terminus: Transaldolase (322 aa).

Lys136 (schiff-base intermediate with substrate) is an active-site residue.

Belongs to the transaldolase family. Type 1 subfamily. Homodimer.

It localises to the cytoplasm. The enzyme catalyses D-sedoheptulose 7-phosphate + D-glyceraldehyde 3-phosphate = D-erythrose 4-phosphate + beta-D-fructose 6-phosphate. The protein operates within carbohydrate degradation; pentose phosphate pathway; D-glyceraldehyde 3-phosphate and beta-D-fructose 6-phosphate from D-ribose 5-phosphate and D-xylulose 5-phosphate (non-oxidative stage): step 2/3. In terms of biological role, transaldolase is important for the balance of metabolites in the pentose-phosphate pathway. The protein is Transaldolase of Xanthomonas oryzae pv. oryzae (strain MAFF 311018).